Consider the following 355-residue polypeptide: Dihydroorotate dehydrogenase (quinone) (355 aa).

FMN contacts are provided by residues 68 to 72 and Thr92; that span reads AGFDK. Residue Lys72 coordinates substrate. 117 to 121 contacts substrate; sequence NRMGF. Positions 154 and 190 each coordinate FMN. Substrate is bound at residue Asn190. Catalysis depends on Ser193, which acts as the Nucleophile. Asn195 serves as a coordination point for substrate. Residues Lys232 and Thr260 each coordinate FMN. A substrate-binding site is contributed by 261–262; sequence NT. FMN-binding positions include Gly286, Gly315, and 336-337; that span reads YS.

Belongs to the dihydroorotate dehydrogenase family. Type 2 subfamily. As to quaternary structure, monomer. FMN is required as a cofactor.

The protein localises to the cell membrane. The enzyme catalyses (S)-dihydroorotate + a quinone = orotate + a quinol. Its pathway is pyrimidine metabolism; UMP biosynthesis via de novo pathway; orotate from (S)-dihydroorotate (quinone route): step 1/1. Functionally, catalyzes the conversion of dihydroorotate to orotate with quinone as electron acceptor. This chain is Dihydroorotate dehydrogenase (quinone), found in Nocardioides sp. (strain ATCC BAA-499 / JS614).